The following is a 156-amino-acid chain: Ribosomal RNA large subunit methyltransferase H (156 aa).

S-adenosyl-L-methionine contacts are provided by residues L73, G104, and 123–128 (LSPLTL).

It belongs to the RNA methyltransferase RlmH family. In terms of assembly, homodimer.

The protein resides in the cytoplasm. The enzyme catalyses pseudouridine(1915) in 23S rRNA + S-adenosyl-L-methionine = N(3)-methylpseudouridine(1915) in 23S rRNA + S-adenosyl-L-homocysteine + H(+). Its function is as follows. Specifically methylates the pseudouridine at position 1915 (m3Psi1915) in 23S rRNA. The polypeptide is Ribosomal RNA large subunit methyltransferase H (Photobacterium profundum (strain SS9)).